The primary structure comprises 389 residues: Putative phosphoserine aminotransferase (389 aa).

Arg-45 serves as a coordination point for L-glutamate. Pyridoxal 5'-phosphate contacts are provided by residues Gly-79–Thr-80, Trp-114, Thr-169, Asp-191, and Gln-214. Lys-215 is modified (N6-(pyridoxal phosphate)lysine). Asn-265–Thr-266 lines the pyridoxal 5'-phosphate pocket.

Belongs to the class-V pyridoxal-phosphate-dependent aminotransferase family. SerC subfamily. As to quaternary structure, homodimer. Pyridoxal 5'-phosphate is required as a cofactor.

The catalysed reaction is O-phospho-L-serine + 2-oxoglutarate = 3-phosphooxypyruvate + L-glutamate. It carries out the reaction 4-(phosphooxy)-L-threonine + 2-oxoglutarate = (R)-3-hydroxy-2-oxo-4-phosphooxybutanoate + L-glutamate. Its pathway is amino-acid biosynthesis; L-serine biosynthesis; L-serine from 3-phospho-D-glycerate: step 2/3. It functions in the pathway cofactor biosynthesis; pyridoxine 5'-phosphate biosynthesis; pyridoxine 5'-phosphate from D-erythrose 4-phosphate: step 3/5. Functionally, catalyzes the reversible conversion of 3-phosphohydroxypyruvate to phosphoserine and of 3-hydroxy-2-oxo-4-phosphonooxybutanoate to phosphohydroxythreonine. The chain is Putative phosphoserine aminotransferase from Schizosaccharomyces pombe (strain 972 / ATCC 24843) (Fission yeast).